The following is a 120-amino-acid chain: Membrane-anchored ubiquitin-fold protein 5 (120 aa).

Residues 7 to 72 form the Ubiquitin-like domain; the sequence is IELKFRLADG…ILENNKTLSE (66 aa). A lipid anchor (S-palmitoyl cysteine) is attached at cysteine 115. Residue cysteine 117 is modified to Cysteine methyl ester. A lipid anchor (S-geranylgeranyl cysteine) is attached at cysteine 117. The propeptide at 118–120 is removed in mature form; that stretch reads CIL.

Ubiquitous.

It localises to the cell membrane. May serve as docking site to facilitate the association of other proteins to the plasma membrane. The sequence is that of Membrane-anchored ubiquitin-fold protein 5 (MUB5) from Arabidopsis thaliana (Mouse-ear cress).